Here is a 20-residue protein sequence, read N- to C-terminus: Cupiennin-6f (20 aa).

Expressed by the venom gland.

It localises to the secreted. In Cupiennius salei (American wandering spider), this protein is Cupiennin-6f.